Here is a 569-residue protein sequence, read N- to C-terminus: Carotenoid cleavage dioxygenase 8 homolog B, chloroplastic (569 aa).

A chloroplast-targeting transit peptide spans 1-43; it reads MSPAMLQASSLCVSAALSGAASRPGRLASQGHQGKRAVAQPLA. The interval 23 to 81 is disordered; the sequence is RPGRLASQGHQGKRAVAQPLAASAVTEAAPPAPVVAPPARPVDAPRRRGGRGGGGGGGE. The span at 52–62 shows a compositional bias: pro residues; that stretch reads PPAPVVAPPAR. H251, H301, H368, and H558 together coordinate Fe cation.

Belongs to the carotenoid oxygenase family. It depends on Fe(2+) as a cofactor. In terms of tissue distribution, expressed in parenchyma cells of the root stele, shoot apex, leaf buds, xylem parenchyma cells of the stem, inflorescences and panicles.

The protein resides in the plastid. It is found in the chloroplast. It catalyses the reaction 9-cis-10'-apo-beta-carotenal + 2 O2 = (2E,4E,6E)-7-hydroxy-4-methylhepta-2,4,6-trienal + (11R)-carlactone. It carries out the reaction all-trans-10'-apo-beta-carotenal + O2 = (2E,4E,6E)-4-methylocta-2,4,6-trienedial + 13-apo-beta-carotenone. In terms of biological role, involved in strigolactones biosynthesis by cleaving the C(27) 9-cis-10'-apo-beta-carotenal produced by CCD7. Produces the C(19) carlactone and a C(8) hydroxyaldehyde. Also shows lower activity with all-trans-10'-apo-beta-carotenal producing a C(9) dialdehyde and the C(18) 13-apo-beta-carotenone. Strigolactones are hormones that inhibit tillering and shoot branching through the MAX-dependent pathway, contribute to the regulation of shoot architectural response to phosphate-limiting conditions and function as rhizosphere signal that stimulates hyphal branching of arbuscular mycorrhizal fungi and trigger seed germination of root parasitic weeds. This is Carotenoid cleavage dioxygenase 8 homolog B, chloroplastic (CCD8B) from Oryza sativa subsp. japonica (Rice).